Reading from the N-terminus, the 594-residue chain is Probable pectinesterase/pectinesterase inhibitor 33 (594 aa).

The N-terminal stretch at 1–22 (MLRGIFHICLLASFLLLPFSSA) is a signal peptide. The segment at 28 to 75 (FTGGTDAPPPWDHNVSPPPETAPSPTPTSSPSTTSPPSPGPVAAPSPI) is disordered. A compositionally biased stretch (pro residues) spans 34-71 (APPPWDHNVSPPPETAPSPTPTSSPSTTSPPSPGPVAA). N-linked (GlcNAc...) asparagine glycosylation is found at asparagine 77, asparagine 170, asparagine 213, and asparagine 226. The pectinesterase inhibitor 33 stretch occupies residues 78-237 (GSVSGDMTWW…SDLIGNCLAV (160 aa)). The tract at residues 280–581 (HLVVAQDRSG…TVGSLIAGGS (302 aa)) is pectinesterase 33. Positions 356 and 386 each coordinate substrate. Aspartate 409 serves as the catalytic Proton donor; for pectinesterase activity. A disulfide bridge connects residues cysteine 423 and cysteine 443. Aspartate 430 functions as the Nucleophile; for pectinesterase activity in the catalytic mechanism. Residues arginine 498 and tryptophan 500 each coordinate substrate.

This sequence in the N-terminal section; belongs to the PMEI family. It in the C-terminal section; belongs to the pectinesterase family. Expressed in siliques.

The protein resides in the secreted. It is found in the cell wall. It carries out the reaction [(1-&gt;4)-alpha-D-galacturonosyl methyl ester](n) + n H2O = [(1-&gt;4)-alpha-D-galacturonosyl](n) + n methanol + n H(+). Its pathway is glycan metabolism; pectin degradation; 2-dehydro-3-deoxy-D-gluconate from pectin: step 1/5. Acts in the modification of cell walls via demethylesterification of cell wall pectin. This is Probable pectinesterase/pectinesterase inhibitor 33 (PME33) from Arabidopsis thaliana (Mouse-ear cress).